We begin with the raw amino-acid sequence, 464 residues long: Cytoplasmic tRNA 2-thiolation protein 2 (464 aa).

It belongs to the CTU2/NCS2 family.

It is found in the cytoplasm. It participates in tRNA modification; 5-methoxycarbonylmethyl-2-thiouridine-tRNA biosynthesis. Its function is as follows. Plays a central role in 2-thiolation of mcm(5)S(2)U at tRNA wobble positions of tRNA(Lys), tRNA(Glu) and tRNA(Gln). May act by forming a heterodimer with NCS6/CTU1 that ligates sulfur from thiocarboxylated URM1 onto the uridine of tRNAs at wobble position. The chain is Cytoplasmic tRNA 2-thiolation protein 2 from Oryza sativa subsp. indica (Rice).